The primary structure comprises 82 residues: Small ribosomal subunit protein bS16c (82 aa).

Belongs to the bacterial ribosomal protein bS16 family.

Its subcellular location is the plastid. The protein resides in the chloroplast. The chain is Small ribosomal subunit protein bS16c from Pyropia yezoensis (Susabi-nori).